A 156-amino-acid chain; its full sequence is Snaclec A4 (156 aa).

The first 23 residues, 1–23 (MGRSISVSFGLLVVFLSLSGTGA), serve as a signal peptide directing secretion. An intrachain disulfide couples C27 to C38. One can recognise a C-type lectin domain in the interval 34–155 (HEGHCYKVFN…CGQPYRFTCE (122 aa)). The N-linked (GlcNAc...) asparagine glycan is linked to N45. 2 disulfides stabilise this stretch: C55–C154 and C129–C146.

This sequence belongs to the snaclec family. Heterodimer; disulfide-linked. Expressed by the venom gland.

It localises to the secreted. Interferes with one step of hemostasis (modulation of platelet aggregation, or coagulation cascade, for example). This is Snaclec A4 from Macrovipera lebetinus (Levantine viper).